The primary structure comprises 968 residues: Protein translocase subunit SecA 1 (968 aa).

ATP is bound by residues glutamine 86, 104–108 (GEGKT), and aspartate 493. Composition is skewed to basic and acidic residues over residues 858–868 (EAEKTEDKAED) and 883–898 (ESAK…ESVA). Positions 858-968 (EAEKTEDKAE…KCHGAPKSRV (111 aa)) are disordered. Residues cysteine 949, cysteine 951, cysteine 960, and histidine 961 each coordinate Zn(2+). Positions 955 to 968 (KKYKKCHGAPKSRV) are enriched in basic residues.

The protein belongs to the SecA family. In terms of assembly, monomer and homodimer. Part of the essential Sec protein translocation apparatus which comprises SecA, SecYEG and auxiliary proteins SecDF. Other proteins may also be involved. Requires Zn(2+) as cofactor.

It is found in the cell membrane. It localises to the cytoplasm. It carries out the reaction ATP + H2O + cellular proteinSide 1 = ADP + phosphate + cellular proteinSide 2.. Functionally, part of the Sec protein translocase complex. Interacts with the SecYEG preprotein conducting channel. Has a central role in coupling the hydrolysis of ATP to the transfer of proteins into and across the cell membrane, serving as an ATP-driven molecular motor driving the stepwise translocation of polypeptide chains across the membrane. In Thermobifida fusca (strain YX), this protein is Protein translocase subunit SecA 1.